Consider the following 483-residue polypeptide: Probable Xaa-Pro aminopeptidase MCYG_06503 (483 aa).

The Mn(2+) site is built by Asp233, Asp244, Glu409, and Glu453.

Belongs to the peptidase M24B family. Mn(2+) serves as cofactor.

The catalysed reaction is Release of any N-terminal amino acid, including proline, that is linked to proline, even from a dipeptide or tripeptide.. Catalyzes the removal of a penultimate prolyl residue from the N-termini of peptides. This Arthroderma otae (strain ATCC MYA-4605 / CBS 113480) (Microsporum canis) protein is Probable Xaa-Pro aminopeptidase MCYG_06503.